The chain runs to 772 residues: Protein transport protein SEC23 F (772 aa).

Zn(2+)-binding residues include C65, C68, C87, and C90. Residues 65–90 are zinc finger-like; the sequence is CKTCKALLNAFARVDFAAMNWVCPFC.

This sequence belongs to the SEC23/SEC24 family. SEC23 subfamily. Component of the coat protein complex II (COPII), composed of at least five proteins: the Sec23/24 complex, the Sec13/31 complex and Sar1. Interacts with SEC24A.

The protein localises to the cytoplasmic vesicle. It is found in the COPII-coated vesicle membrane. Its subcellular location is the endoplasmic reticulum membrane. It localises to the membrane. Component of the coat protein complex II (COPII) which promotes the formation of transport vesicles from the endoplasmic reticulum (ER). The coat has two main functions, the physical deformation of the endoplasmic reticulum membrane into vesicles and the selection of cargo molecules. The polypeptide is Protein transport protein SEC23 F (Arabidopsis thaliana (Mouse-ear cress)).